Here is a 233-residue protein sequence, read N- to C-terminus: Histidinol dehydrogenase (233 aa).

3 residues coordinate substrate: Ser-31, Gln-53, and His-56. The Zn(2+) site is built by Gln-53 and His-56. Catalysis depends on proton acceptor residues Glu-121 and His-122. The substrate site is built by His-122, Asp-155, Glu-209, and His-214. Asp-155 lines the Zn(2+) pocket. His-214 provides a ligand contact to Zn(2+).

Belongs to the histidinol dehydrogenase family. Zn(2+) serves as cofactor.

The enzyme catalyses L-histidinol + 2 NAD(+) + H2O = L-histidine + 2 NADH + 3 H(+). It functions in the pathway amino-acid biosynthesis; L-histidine biosynthesis; L-histidine from 5-phospho-alpha-D-ribose 1-diphosphate: step 9/9. In terms of biological role, catalyzes the sequential NAD-dependent oxidations of L-histidinol to L-histidinaldehyde and then to L-histidine. This Thiocapsa roseopersicina protein is Histidinol dehydrogenase (hisD).